The chain runs to 1580 residues: MEPGSMVRAIFDFCPSVSEELPLFVGDVIEVLAVVDEFWLLGKKEDVTGQFPSSFVEIVTIPSLKEGERLFVCICEFVSRELNSLSLHRGDLVILDDSAPTAGWLQGRSCWGAWGFFPSSCVQELCLSSRSRRWHAQSALLQAPEYSLGQARALMGLSAQLDEELDFREGDLITIIGVPEPGWFEGELEGRRGIFPEGFVELLGPLRTVDESVNSRSGDDSAVNGEVDVPPEEAESGGDEDDQQSGTYGIALYRFQALETNELDFEVGDRIQILGTLEDGWLEGCLKGKTGVFPHRFVKLCPSNRTEETTAQPQESSFPKDSESSVGKSGDSVVEEARQEPWECEEERPDYDLPGQASVPQDHVAPEWTGDTISGQDKDASGSSPDVDLERPLAKDLSTPDPSEEVNGVSSQPQVPIHPKVQKSQHYLTAGGSHQTSDPFSELVPLEARTRDYSSLPPRRTYAQGWSFQKPASHLQRASSLTASRLDRPSHFCHPAMASYAQKHQTSTENTASLHDPPERPERRPGLQDRGPATDITTASQGDSLDLDSKLTQQLIEFEKSLSGPSTEPETIVRRFSIMDFYSEKDIVRGSSNSLPSQAFPERRKTLRPPPPRPRTPTPISSHLLVDQSPKPVPTLVVRPSRPAPLPPPAQQRMNTASPKPTSCAHPGWEAPEKEDSEHMEKSPAQTFPCPSMLARIRDVEQDLDTCTRAQEELNLLLEEKQDDPSRAETLETLRSYESTIQSLTLELQQLRDMTLLSSQSSSLAAPFGSVSTENPEQRMLEKRAKVVAELLQTERDYIRDLEMCIERVMVPLQQAQVPNVDFEGLFGNMQTVIKVSKQLLAALEISDAVGMSSCDCLVPGPVFLDHRDELEGTYRVYCQNHDEAISLLEMYEKDEKTQKHLQDYLADLKGCTNYINLGSFLIKPVQRIMRYPLLLMELLNSTPESHPDKVPLTNAVLAVKEINVNINEYKRRKDLVLKYRKGDEDSLMEKISKLNIHSIIKKSSRVSSHLKHLTGFAPQLKDEVFEETEKNFRMQERLIKSFIRDLSLYLQHIRESACVKVVAAMSIWDLCMERGHHDLEQFEKVHRYISDQLFTRFKERTERLVINPLNQLLNMFTGPYKLVQKRFDKLLDFYNCTERAEKLKDKKTLEELQSARNNYEALNSQLLDELPKFQQYAQSLFTNCIHGYAEAHCDFVQQALEQLQPLLSLLKATDREGNLIAIFLEEHSRVLQQLQVFTFFPESLPAPRKPFERKTTDRQSSRKTLLGMPSYMLQSEELRSSLLARYPPEKLFHVQRNFNAAQDLDVSLLEGDLVGVIKKKDPMGSQNRWLVDNGVTKGFVYSSFLKPYNPRCSHSDASVASHSSTESEHSGSSPGCHRQNSHSALTFNSNNMTVSFTSGLALTQPQDASPLKDCAHETLAVSWNTGHPETGPSTCSSDPGFSCQRRLGNPADGARDISQPASTLRGCQRSSPHSEVVGYSVPGRNDQGSDSIKGSARVCQAPEDRDRGVGSSETEGNQVYFAIYTFKARNPNELSVLANQRLRIHEFKDVTGNTEWWLAEVNGRKGYVPSNYIRKTEYT.

An N-acetylmethionine modification is found at Met1. 3 consecutive SH3 domains span residues 2-61 (EPGS…IVTI), 66-127 (EGER…ELCL), and 146-205 (YSLG…LLGP). Disordered stretches follow at residues 211-245 (ESVN…DQQS), 304-446 (NRTE…LVPL), 500-546 (YAQK…DSLD), and 589-688 (RGSS…AQTF). Over residues 229 to 243 (VPPEEAESGGDEDDQ) the composition is skewed to acidic residues. An SH3 4 domain is found at 244–303 (QSGTYGIALYRFQALETNELDFEVGDRIQILGTLEDGWLEGCLKGKTGVFPHRFVKLCPS). 2 stretches are compositionally biased toward polar residues: residues 422 to 439 (QKSQ…TSDP) and 502 to 513 (QKHQTSTENTAS). The segment covering 516–527 (DPPERPERRPGL) has biased composition (basic and acidic residues). Residues 608 to 617 (RPPPPRPRTP) show a composition bias toward pro residues. A compositionally biased stretch (basic and acidic residues) spans 671 to 682 (APEKEDSEHMEK). Ser683 is modified (phosphoserine). The stretch at 694 to 755 (LARIRDVEQD…LELQQLRDMT (62 aa)) forms a coiled coil. A DH domain is found at 783-970 (KRAKVVAELL…KEINVNINEY (188 aa)). One can recognise a BAR domain in the interval 1011–1220 (LKHLTGFAPQ…LKATDREGNL (210 aa)). Residues 1288 to 1351 (PPEKLFHVQR…YSSFLKPYNP (64 aa)) enclose the SH3 5 domain. The segment covering 1356–1365 (SDASVASHSS) has biased composition (low complexity). Disordered regions lie at residues 1356–1384 (SDAS…NSHS) and 1426–1514 (TGHP…GSSE). Polar residues predominate over residues 1426–1440 (TGHPETGPSTCSSDP). The SH3 6 domain occupies 1516-1579 (EGNQVYFAIY…PSNYIRKTEY (64 aa)).

In terms of assembly, binds DNM1 via its N-terminal SH3 domains. The C-terminal SH3 domain binds a complex containing actin, tubulin, Hsp70 and actin-regulatory proteins, such as ENAH, EVL, WIRE, CR16, WAVE1 and NAP1L1. Interacts with FASLG. Interacts (via SH3 domain 6) with WASL. Interacts (via SH3 domain 6) interacts with ENAH. Interacts (via C-terminal domain) with TJP1; required for the apical cell-cell junction localization of DNMBP.

The protein resides in the cytoplasm. Its subcellular location is the golgi apparatus. It is found in the golgi stack. It localises to the cytoskeleton. The protein localises to the synapse. The protein resides in the cell junction. Functionally, plays a critical role as a guanine nucleotide exchange factor (GEF) for CDC42 in several intracellular processes associated with the actin and microtubule cytoskeleton. Regulates the structure of apical junctions in epithelial cells. Participates in the normal lumenogenesis of epithelial cell cysts by regulating spindle orientation. Plays a role in ciliogenesis. May play a role in membrane trafficking between the cell surface and the Golgi. This chain is Dynamin-binding protein, found in Mus musculus (Mouse).